We begin with the raw amino-acid sequence, 1473 residues long: NACHT, LRR and PYD domains-containing protein 1 (1473 aa).

Residues 1 to 92 (MAGGAWGRLA…CAQAQEGAGH (92 aa)) enclose the Pyrin domain. A disordered region spans residues 90–113 (AGHSPSFPYSPSEPHLGSPSQPTS). 3 positions are modified to phosphoserine; by MAPK11 and MAPK14: serine 93, serine 99, and serine 101. Phosphoserine; by MAPK14 is present on serine 107. A ZAKalpha motif 1 motif is present at residues 111-117 (PTSTAVL). Threonine 112 bears the Phosphothreonine; by MAPK11, MAPK14 and MAP3K20 mark. Serine 113 carries the post-translational modification Phosphoserine; by MAP3K20. Phosphothreonine; by MAP3K20 is present on residues threonine 114 and threonine 129. Serine 132 carries the post-translational modification Phosphoserine; by MAP3K20. The disordered stretch occupies residues 160–254 (LPSSPDHESP…HTSLQPHHHP (95 aa)). The residue at position 163 (serine 163) is a Phosphoserine; by MAPK14. Phosphoserine; by MAPK11 and MAPk14 is present on serine 168. Serine 170 bears the Phosphoserine; by MAPK11 and MAPK14 mark. Polar residues predominate over residues 170–182 (SQESPNAPTSTAV). Residue serine 173 is modified to Phosphoserine; by MAPK11. The ZAKalpha motif 2 motif lies at 177 to 183 (PTSTAVL). Position 178 is a phosphothreonine; by MAPK11 (threonine 178). Residue serine 179 is modified to Phosphoserine; by MAPK11 and MAP3K20. Threonine 180 carries the phosphothreonine; by MAPK11 and MAP3K20 modification. The span at 218-231 (EIREREREKSEKGR) shows a compositional bias: basic and acidic residues. One can recognise an NACHT domain in the interval 328–637 (RIVILQGAAG…EFFAAMSYVL (310 aa)). 334-341 (GAAGIGKS) is a binding site for ATP. LRR repeat units follow at residues 809–830 (NLKELDLSGNSLSHSAVKSLCK), 838–858 (LLETLRLAGCGLTAEDCKDLA), 866–887 (TLTELDLSFNVLTDAGAKHLCQ), 895–915 (KLQRLQLVSCGLTSDCCQDLA), 923–944 (SLKELDLQQNNLDDVGVRLLCE), and 950–973 (ACKLIRLGLDQTTLSDEMRQELRA). Residues 991–1017 (VMTPTEGLDTGEMSNSTSSLKRQRLGS) are disordered. A ZU5 region spans residues 1079 to 1212 (FWGPTGPVAT…HHIVLENPSF (134 aa)). The FIIND domain maps to 1079–1364 (FWGPTGPVAT…LMPATTLIPP (286 aa)). The UPA stretch occupies residues 1213-1364 (SPLGVLLKMI…LMPATTLIPP (152 aa)). In terms of domain architecture, CARD spans 1374–1463 (DAPQLLHFVD…HLIMELWEKG (90 aa)).

The protein belongs to the NLRP family. Interacts (via LRR repeats) with BCL2 and BCL2L1 (via the loop between motifs BH4 and BH3); these interactions reduce NLRP1 inflammasome-induced CASP1 activation and IL1B release, possibly by impairing NLRP1 interaction with PYCARD. Interacts with NOD2; this interaction is enhanced in the presence of muramyl dipeptide (MDP) and increases IL1B release. Interacts with EIF2AK2/PKR; this interaction requires EIF2AK2 activity, is accompanied by EIF2AK2 autophosphorylation and promotes inflammasome assembly in response to danger-associated signals. Interacts with MEFV; this interaction targets NLRP1 to degradation by autophagy, hence preventing excessive IL1B- and IL18-mediated inflammation. Binds (via LRR domain) to dsDNA and dsRNA. Interacts with DPP9; leading to inhibit activation of the inflammasome. DPP9 acts via formation of a ternary complex, composed of a DPP9 homodimer, one full-length NLRP1 protein, and one cleaved C-terminus of NLRP1 (NACHT, LRR and PYD domains-containing protein 1, C-terminus). Interacts with DPP8; leading to inhibit activation of the inflammasome, probably via formation of a ternary complex with DPP8. In terms of assembly, interacts with the C-terminal part of NLRP1 (NACHT, LRR and PYD domains-containing protein 1, C-terminus) in absence of pathogens and other damage-associated signals. As to quaternary structure, interacts with the N-terminal part of NLRP1 (NACHT, LRR and PYD domains-containing protein 1, N-terminus) in absence of pathogens and other damage-associated signals. Homomultimer; forms the NLRP1 inflammasome polymeric complex, a filament composed of homopolymers of this form in response to pathogens and other damage-associated signals. The NLRP1 inflammasome polymeric complex associates with PYCARD/ASC. Interacts (via CARD domain) with PYCARD/ASC (via CARD domain); leading to pro-caspase-1 (proCASP1) recruitment. Pro-caspase-1 (proCASP1) filament formation increases local enzyme concentration, resulting in trans-autocleavage and activation. Active CASP1 then processes IL1B and IL18 precursors, leading to the release of mature cytokines in the extracellular milieu and inflammatory response. (Microbial infection) Interacts with vaccinia virus protein F1. In terms of assembly, (Microbial infection) Interacts with human herpes virus 8/HHV-8 proteins ORF45; relieving autoinhibition of the NLRP1 inflammasome. Post-translationally, autocatalytically cleaved. Autocatalytic cleavage in FIIND region occurs constitutively, prior to activation signals, and is required for inflammasome activity (IL1B release), possibly by facilitating CASP1 binding. Both N- and C-terminal parts remain associated non-covalently. In terms of processing, ubiquitinated by the cullin:ZER1/ZYG11B complex in response to pathogen-associated signals, leading to its degradation by the proteasome and subsequent release of the cleaved C-terminal part of the protein (NACHT, LRR and PYD domains-containing protein 1, C-terminus), which polymerizes and forms the NLRP1 inflammasome. Phosphorylated by MAP3K20 isoform ZAKalpha, MAPK11 and MAPK14 in response to UV-B irradiation and ribosome collisions, promoting activation of the NLRP1 inflammasome and pyroptosis. Post-translationally, (Microbial infection) Cleaved between Gln-130 and Gly-131 by the Protease 3C from various human enteroviruses and rhinoviruses (EV68, EV71, Coxsackievirus B3, HRV-14 and HRV-16). This cleavage triggers N-glycine-mediated proteasomal degradation of the autoinhibitory NLRP1 N-terminal fragment via the cullin:ZER1/ZYG11B complex which liberates the activating C-terminal fragment and activates NLRP1 inflammasome. In terms of processing, (Microbial infection) Cleaved between Gln-333 and Gly-334 by the 3C-like proteinase nsp5 from human coronavirus SARS-CoV-2. This cleavage liberates the activating C-terminal fragment and activates NLRP1 inflammasome, leading to downstream activation of GSDME and lung epithelial cell death. As to expression, widely expressed. Abundantly expressed in primary immune cells (isoform 1 and isoform 2), including in neutrophils, monocytes/macrophages, dendritic cells (mostly Langerhans cells), and B- and T-lymphocytes (at protein level). Strongly expressed in epithelial cells lining the glandular epithelium, such as that of the gastrointestinal tract (stomach, small intestine, colon), the respiratory tract (trachea and bronchi), and the endometrial and endocervical glands, gallbladder, prostate, and breast (at protein level). In testis, expressed in spermatogonia and primary spermatocytes, but not in Sertoli cells (at protein level). In the brain, expressed in neurons, in particular in pyramidal ones and in oligodendrocytes, but not detected in microglia (at protein level). Expressed in adult and fetal ocular tissues, including in adult and 24-week old fetal choroid, sclera, cornea, and optic nerve, as well as in adult retina and fetal retina/retinal pigment epithelium. Highly expressed in the skin throughout the epidermis and in dermal fibroblasts, in both glabrous skin and plantar skin. It is detected in keratinocytes, but not in melanocytes. Expressed in epidermal appendages such as hair follicles.

The protein resides in the cytoplasm. It is found in the cytosol. The protein localises to the nucleus. Its subcellular location is the inflammasome. It catalyses the reaction ATP + H2O = ADP + phosphate + H(+). NLRP1 inflammasome is activated by cleavage by the Protease 3C from various human enteroviruses and rhinoviruses (EV68, EV71, Coxsackievirus B3, HRV-14 and HRV-16): cleavage promotes ubiquitination and degradation of the N-terminal part, releasing the cleaved C-terminal part of the protein (NACHT, LRR and PYD domains-containing protein 1, C-terminus), which polymerizes and forms the NLRP1 inflammasome. Activated double-stranded RNA: positive-strand RNA viruses such as Semliki forest virus and long dsRNA activate the NLRP1 inflammasome. In contrast to its mouse ortholog, not activated by Bacillus anthracis lethal toxin. NLRP1 inflammasome is inhibited by DPP8 and DPP9, which sequester the C-terminal fragment of NLRP1 (NACHT, LRR and PYD domains-containing protein 1, C-terminus) in a ternary complex, thereby preventing NLRP1 oligomerization and activation. NLRP1 inflammasome is activated by Val-boroPro (Talabostat, PT-100), an inhibitor of dipeptidyl peptidases DPP8 and DPP9. Val-boroPro relieves inhibition of DPP8 and/or DPP9 by promoting disruption of the ternary complex, releasing its C-terminal part from autoinhibition. ATPase activity is activated by dsRNA-binding but not dsDNA-binding. Its activity is regulated as follows. (Microbial infection) The NLRP1 inflammasome is activated by human herpes virus 8/HHV-8 protein ORF45, which interacts with the N-terminal part of NLRP1 and promotes its translocation into the nucleus, relieving autoinhibition and leading to activation. With respect to regulation, (Microbial infection) NLRP1 inflammasome is activated by cleavage by the 3C-like proteinase nsp5 from human coronavirus SARS-CoV-2. Its function is as follows. Acts as the sensor component of the NLRP1 inflammasome, which mediates inflammasome activation in response to various pathogen-associated signals, leading to subsequent pyroptosis. Inflammasomes are supramolecular complexes that assemble in the cytosol in response to pathogens and other damage-associated signals and play critical roles in innate immunity and inflammation. Acts as a recognition receptor (PRR): recognizes specific pathogens and other damage-associated signals, such as cleavage by some human enteroviruses and rhinoviruses, double-stranded RNA, UV-B irradiation, or Val-boroPro inhibitor, and mediates the formation of the inflammasome polymeric complex composed of NLRP1, CASP1 and PYCARD/ASC. In response to pathogen-associated signals, the N-terminal part of NLRP1 is degraded by the proteasome, releasing the cleaved C-terminal part of the protein (NACHT, LRR and PYD domains-containing protein 1, C-terminus), which polymerizes and associates with PYCARD/ASC to initiate the formation of the inflammasome complex: the NLRP1 inflammasome recruits pro-caspase-1 (proCASP1) and promotes caspase-1 (CASP1) activation, which subsequently cleaves and activates inflammatory cytokines IL1B and IL18 and gasdermin-D (GSDMD), leading to pyroptosis. In the absence of GSDMD expression, the NLRP1 inflammasome is able to recruit and activate CASP8, leading to activation of gasdermin-E (GSDME). Activation of NLRP1 inflammasome is also required for HMGB1 secretion; the active cytokines and HMGB1 stimulate inflammatory responses. Binds ATP and shows ATPase activity. Plays an important role in antiviral immunity and inflammation in the human airway epithelium. Specifically recognizes a number of pathogen-associated signals: upon infection by human rhinoviruses 14 and 16 (HRV-14 and HRV-16), NLRP1 is cleaved and activated which triggers NLRP1-dependent inflammasome activation and IL18 secretion. Positive-strand RNA viruses, such as Semliki forest virus and long dsRNA activate the NLRP1 inflammasome, triggering IL1B release in a NLRP1-dependent fashion. Acts as a direct sensor for long dsRNA and thus RNA virus infection. May also be activated by muramyl dipeptide (MDP), a fragment of bacterial peptidoglycan, in a NOD2-dependent manner. The NLRP1 inflammasome is also activated in response to UV-B irradiation causing ribosome collisions: ribosome collisions cause phosphorylation and activation of NLRP1 in a MAP3K20-dependent manner, leading to pyroptosis. In terms of biological role, constitutes the precursor of the NLRP1 inflammasome, which mediates autoproteolytic processing within the FIIND domain to generate the N-terminal and C-terminal parts, which are associated non-covalently in absence of pathogens and other damage-associated signals. Regulatory part that prevents formation of the NLRP1 inflammasome: in absence of pathogens and other damage-associated signals, interacts with the C-terminal part of NLRP1 (NACHT, LRR and PYD domains-containing protein 1, C-terminus), preventing activation of the NLRP1 inflammasome. In response to pathogen-associated signals, this part is ubiquitinated and degraded by the proteasome, releasing the cleaved C-terminal part of the protein, which polymerizes and forms the NLRP1 inflammasome. Functionally, constitutes the active part of the NLRP1 inflammasome. In absence of pathogens and other damage-associated signals, interacts with the N-terminal part of NLRP1 (NACHT, LRR and PYD domains-containing protein 1, N-terminus), preventing activation of the NLRP1 inflammasome. In response to pathogen-associated signals, the N-terminal part of NLRP1 is degraded by the proteasome, releasing this form, which polymerizes and associates with PYCARD/ASC to form of the NLRP1 inflammasome complex: the NLRP1 inflammasome complex then directly recruits pro-caspase-1 (proCASP1) and promotes caspase-1 (CASP1) activation, leading to gasdermin-D (GSDMD) cleavage and subsequent pyroptosis. Its function is as follows. It is unclear whether is involved in inflammasome formation. It is not cleaved within the FIIND domain, does not assemble into specks, nor promote IL1B release. However, in an vitro cell-free system, it has been shown to be activated by MDP. The polypeptide is NACHT, LRR and PYD domains-containing protein 1 (Homo sapiens (Human)).